The chain runs to 597 residues: Large ribosomal subunit assembly factor BipA (597 aa).

The tr-type G domain occupies 3-198 (LPIRNVAIIA…AILHHVPPPA (196 aa)). GTP contacts are provided by residues 15-20 (DHGKTT) and 128-131 (NKID).

The protein belongs to the TRAFAC class translation factor GTPase superfamily. Classic translation factor GTPase family. BipA subfamily. In terms of assembly, monomer.

It is found in the cytoplasm. It catalyses the reaction GTP + H2O = GDP + phosphate + H(+). Functionally, a 50S ribosomal subunit assembly protein with GTPase activity, required for 50S subunit assembly at low temperatures, may also play a role in translation. Binds GTP and analogs. Binds the 70S ribosome between the 30S and 50S subunits, in a similar position as ribosome-bound EF-G; it contacts a number of ribosomal proteins, both rRNAs and the A-site tRNA. The sequence is that of Large ribosomal subunit assembly factor BipA from Synechocystis sp. (strain ATCC 27184 / PCC 6803 / Kazusa).